The following is a 558-amino-acid chain: Membrane protein insertase YidC (558 aa).

6 helical membrane-spanning segments follow: residues 5–25 (IINL…WQYF), 332–352 (AIDF…MNFF), 355–375 (YVGN…LLMF), 429–449 (LPIL…YVTI), 474–494 (LFGL…WPIL), and 520–540 (FMPL…LIYW).

It belongs to the OXA1/ALB3/YidC family. Type 1 subfamily. In terms of assembly, interacts with the Sec translocase complex via SecD. Specifically interacts with transmembrane segments of nascent integral membrane proteins during membrane integration.

It is found in the cell inner membrane. Required for the insertion and/or proper folding and/or complex formation of integral membrane proteins into the membrane. Involved in integration of membrane proteins that insert both dependently and independently of the Sec translocase complex, as well as at least some lipoproteins. Aids folding of multispanning membrane proteins. The chain is Membrane protein insertase YidC from Rickettsia typhi (strain ATCC VR-144 / Wilmington).